A 71-amino-acid polypeptide reads, in one-letter code: Large ribosomal subunit protein bL31 (71 aa).

Zn(2+) is bound by residues C16, C18, C38, and C41.

It belongs to the bacterial ribosomal protein bL31 family. Type A subfamily. In terms of assembly, part of the 50S ribosomal subunit. Requires Zn(2+) as cofactor.

In terms of biological role, binds the 23S rRNA. This is Large ribosomal subunit protein bL31 from Francisella tularensis subsp. mediasiatica (strain FSC147).